Reading from the N-terminus, the 422-residue chain is 3-phosphoshikimate 1-carboxyvinyltransferase (422 aa).

The 3-phosphoshikimate site is built by lysine 21, serine 22, and arginine 26. Residue lysine 21 participates in phosphoenolpyruvate binding. Phosphoenolpyruvate contacts are provided by glycine 93 and arginine 121. 3-phosphoshikimate contacts are provided by serine 166, serine 167, glutamine 168, serine 194, aspartate 310, and lysine 337. Glutamine 168 is a phosphoenolpyruvate binding site. Residue aspartate 310 is the Proton acceptor of the active site. Phosphoenolpyruvate-binding residues include arginine 341, arginine 382, and lysine 407.

This sequence belongs to the EPSP synthase family. In terms of assembly, monomer.

The protein localises to the cytoplasm. The enzyme catalyses 3-phosphoshikimate + phosphoenolpyruvate = 5-O-(1-carboxyvinyl)-3-phosphoshikimate + phosphate. It participates in metabolic intermediate biosynthesis; chorismate biosynthesis. Catalyzes the transfer of the enolpyruvyl moiety of phosphoenolpyruvate (PEP) to the 5-hydroxyl of shikimate-3-phosphate (S3P) to produce enolpyruvyl shikimate-3-phosphate and inorganic phosphate. This Methanoculleus marisnigri (strain ATCC 35101 / DSM 1498 / JR1) protein is 3-phosphoshikimate 1-carboxyvinyltransferase.